The chain runs to 170 residues: Adenine phosphoribosyltransferase (170 aa).

Belongs to the purine/pyrimidine phosphoribosyltransferase family. In terms of assembly, homodimer.

The protein resides in the cytoplasm. It carries out the reaction AMP + diphosphate = 5-phospho-alpha-D-ribose 1-diphosphate + adenine. It participates in purine metabolism; AMP biosynthesis via salvage pathway; AMP from adenine: step 1/1. Its function is as follows. Catalyzes a salvage reaction resulting in the formation of AMP, that is energically less costly than de novo synthesis. This chain is Adenine phosphoribosyltransferase, found in Streptococcus sanguinis (strain SK36).